The following is a 574-amino-acid chain: uncharacterized protein (574 aa).

This is an uncharacterized protein from Homo sapiens (Human).